A 156-amino-acid chain; its full sequence is Small ribosomal subunit protein uS7 (156 aa).

The protein belongs to the universal ribosomal protein uS7 family. As to quaternary structure, part of the 30S ribosomal subunit. Contacts proteins S9 and S11.

Its function is as follows. One of the primary rRNA binding proteins, it binds directly to 16S rRNA where it nucleates assembly of the head domain of the 30S subunit. Is located at the subunit interface close to the decoding center, probably blocks exit of the E-site tRNA. The polypeptide is Small ribosomal subunit protein uS7 (Tremblaya princeps).